A 1028-amino-acid chain; its full sequence is Beta-galactosidase (1028 aa).

Residues Asn104 and Asp203 each contribute to the substrate site. Asp203 lines the Na(+) pocket. 3 residues coordinate Mg(2+): Glu418, His420, and Glu463. Substrate-binding positions include Glu463 and 539–542 (EYAH). Residue Glu463 is the Proton donor of the active site. The active-site Nucleophile is the Glu539. Residue Asn599 participates in Mg(2+) binding. Positions 603 and 606 each coordinate Na(+). Substrate contacts are provided by Asn606 and Trp1003.

The protein belongs to the glycosyl hydrolase 2 family. As to quaternary structure, homotetramer. Requires Mg(2+) as cofactor. Na(+) serves as cofactor.

The catalysed reaction is Hydrolysis of terminal non-reducing beta-D-galactose residues in beta-D-galactosides.. The chain is Beta-galactosidase from Enterobacter cloacae.